The primary structure comprises 229 residues: Echinolectin 1 (229 aa).

Residue N94 is glycosylated (N-linked (GlcNAc...) asparagine).

It is found in the secreted. This is Echinolectin 1 from Echinometra lucunter (Rock-boring urchin).